The primary structure comprises 250 residues: Triosephosphate isomerase (250 aa).

9–11 is a substrate binding site; the sequence is NWK. H95 (electrophile) is an active-site residue. The Proton acceptor role is filled by E167. Residues G173, S212, and 233-234 contribute to the substrate site; that span reads GG.

It belongs to the triosephosphate isomerase family. In terms of assembly, homodimer.

It localises to the cytoplasm. It carries out the reaction D-glyceraldehyde 3-phosphate = dihydroxyacetone phosphate. It functions in the pathway carbohydrate biosynthesis; gluconeogenesis. Its pathway is carbohydrate degradation; glycolysis; D-glyceraldehyde 3-phosphate from glycerone phosphate: step 1/1. Its function is as follows. Involved in the gluconeogenesis. Catalyzes stereospecifically the conversion of dihydroxyacetone phosphate (DHAP) to D-glyceraldehyde-3-phosphate (G3P). This Endomicrobium trichonymphae protein is Triosephosphate isomerase.